Here is a 95-residue protein sequence, read N- to C-terminus: Pyrimidine/purine nucleoside phosphorylase (95 aa).

The protein belongs to the nucleoside phosphorylase PpnP family.

It carries out the reaction a purine D-ribonucleoside + phosphate = a purine nucleobase + alpha-D-ribose 1-phosphate. The enzyme catalyses adenosine + phosphate = alpha-D-ribose 1-phosphate + adenine. The catalysed reaction is cytidine + phosphate = cytosine + alpha-D-ribose 1-phosphate. It catalyses the reaction guanosine + phosphate = alpha-D-ribose 1-phosphate + guanine. It carries out the reaction inosine + phosphate = alpha-D-ribose 1-phosphate + hypoxanthine. The enzyme catalyses thymidine + phosphate = 2-deoxy-alpha-D-ribose 1-phosphate + thymine. The catalysed reaction is uridine + phosphate = alpha-D-ribose 1-phosphate + uracil. It catalyses the reaction xanthosine + phosphate = alpha-D-ribose 1-phosphate + xanthine. In terms of biological role, catalyzes the phosphorolysis of diverse nucleosides, yielding D-ribose 1-phosphate and the respective free bases. Can use uridine, adenosine, guanosine, cytidine, thymidine, inosine and xanthosine as substrates. Also catalyzes the reverse reactions. The sequence is that of Pyrimidine/purine nucleoside phosphorylase from Enterobacter sp. (strain 638).